Here is a 520-residue protein sequence, read N- to C-terminus: Probable cytosol aminopeptidase (520 aa).

Positions 232 and 237 each coordinate Mn(2+). The active site involves lysine 244. Positions 255, 314, and 316 each coordinate Mn(2+). Arginine 318 is a catalytic residue. The interval 488–520 is disordered; it reads KAKKSTAKKATTKKTTTRKTASKTKSTKSKARK.

The protein belongs to the peptidase M17 family. Requires Mn(2+) as cofactor.

The protein resides in the cytoplasm. It carries out the reaction Release of an N-terminal amino acid, Xaa-|-Yaa-, in which Xaa is preferably Leu, but may be other amino acids including Pro although not Arg or Lys, and Yaa may be Pro. Amino acid amides and methyl esters are also readily hydrolyzed, but rates on arylamides are exceedingly low.. It catalyses the reaction Release of an N-terminal amino acid, preferentially leucine, but not glutamic or aspartic acids.. Its function is as follows. Presumably involved in the processing and regular turnover of intracellular proteins. Catalyzes the removal of unsubstituted N-terminal amino acids from various peptides. The sequence is that of Probable cytosol aminopeptidase (pepA) from Metamycoplasma salivarium (Mycoplasma salivarium).